The sequence spans 299 residues: CCR4-NOT transcription complex subunit 9 (299 aa).

It belongs to the CNOT9 family. In terms of assembly, homodimer. Component of the CCR4-NOT complex.

It is found in the nucleus. Its subcellular location is the cytoplasm. It localises to the P-body. In terms of biological role, component of the CCR4-NOT complex which is one of the major cellular mRNA deadenylases and is linked to various cellular processes including bulk mRNA degradation, miRNA-mediated repression, translational repression during translational initiation and general transcription regulation. Additional complex functions may be a consequence of its influence on mRNA expression. Involved in down-regulation of MYB- and JUN-dependent transcription. Enhances ligand-dependent transcriptional activity of nuclear hormone receptors. May play a role in cell differentiation. The polypeptide is CCR4-NOT transcription complex subunit 9 (Xenopus tropicalis (Western clawed frog)).